Reading from the N-terminus, the 86-residue chain is Small ribosomal subunit protein bS16 (86 aa).

It belongs to the bacterial ribosomal protein bS16 family.

This chain is Small ribosomal subunit protein bS16, found in Thermoanaerobacter pseudethanolicus (strain ATCC 33223 / 39E) (Clostridium thermohydrosulfuricum).